A 402-amino-acid chain; its full sequence is Glutamate N-acetyltransferase (402 aa).

Positions 146, 172, 185, 267, 397, and 402 each coordinate substrate. The active-site Nucleophile is Thr-185.

It belongs to the ArgJ family. In terms of assembly, heterotetramer of two alpha and two beta chains.

The protein resides in the cytoplasm. The enzyme catalyses N(2)-acetyl-L-ornithine + L-glutamate = N-acetyl-L-glutamate + L-ornithine. The protein operates within amino-acid biosynthesis; L-arginine biosynthesis; L-ornithine and N-acetyl-L-glutamate from L-glutamate and N(2)-acetyl-L-ornithine (cyclic): step 1/1. Its activity is regulated as follows. Competitively inhibited by L-ornithine. In terms of biological role, catalyzes the transfer of the acetyl group from N(2)-acetylornithine to glutamate, forming N-acetylglutamate and L-ornithine. This Methanocaldococcus jannaschii (strain ATCC 43067 / DSM 2661 / JAL-1 / JCM 10045 / NBRC 100440) (Methanococcus jannaschii) protein is Glutamate N-acetyltransferase.